The chain runs to 498 residues: Phosphatidylserine synthase (498 aa).

The disordered stretch occupies residues 1 to 65; that stretch reads MKKRTNSRGT…GSVSSAGARR (65 aa). At 1–92 the chain is on the cytoplasmic side; sequence MKKRTNSRGT…VDDISLDFFY (92 aa). Over residues 7–25 the composition is skewed to polar residues; that stretch reads SRGTPTSSGDALLDTSFSS. Residues 93-113 form a helical membrane-spanning segment; the sequence is KPHTITLLAVSVLAVMYFAFV. The Lumenal segment spans residues 114–122; it reads RNEANVDEN. A helical transmembrane segment spans residues 123–143; it reads LWAGLLCIVFFFLIVSVIAFP. Over 144–153 the chain is Cytoplasmic; it reads NGPFTRPHPA. The chain crosses the membrane as a helical span at residues 154 to 174; it reads VWRILFGCSVLYLLTLQFLMF. Residues 175 to 239 lie on the Lumenal side of the membrane; sequence QNYPTIRSIF…AFKAILIRHM (65 aa). The N-linked (GlcNAc...) asparagine glycan is linked to asparagine 205. Residues 240–260 traverse the membrane as a helical segment; that stretch reads GILWAISVMWEITEITFAHLL. Residues 261 to 266 are Cytoplasmic-facing; the sequence is PNFIEC. A helical transmembrane segment spans residues 267–287; the sequence is WWDALILDVIICNGLGIWMGL. Residues 288–339 are Lumenal-facing; that stretch reads KICQILEMREYKWASIKDISTTTGKIKRAMLQFTPESWSAIRWLDPKSTAMR. Residues 340 to 360 form a helical membrane-spanning segment; that stretch reads FAAVIQLVIFWQVTELNTFFL. The Cytoplasmic portion of the chain corresponds to 361–367; sequence KHIFEMP. The chain crosses the membrane as a helical span at residues 368-388; sequence PDHFIVIGRLIFIGLFVAPSV. At 389–402 the chain is on the lumenal side; it reads RQYYVYVTDTRCKR. A helical transmembrane segment spans residues 403 to 423; the sequence is VGTQCWVYGAIMVSEAILCIK. At 424–436 the chain is on the cytoplasmic side; the sequence is NGKELFERTQAIN. A helical transmembrane segment spans residues 437–457; that stretch reads IVLWLTVQVIISVAFVYLAVY. Residues 458-498 are Lumenal-facing; that stretch reads WQQRQLKKVSSTPAKTKETIPASSSSPSKGKLSPQKEKKLK. Residues 465–498 form a disordered region; that stretch reads KVSSTPAKTKETIPASSSSPSKGKLSPQKEKKLK. Positions 478–490 are enriched in low complexity; it reads PASSSSPSKGKLS.

Belongs to the phosphatidyl serine synthase family.

The protein localises to the endoplasmic reticulum membrane. It catalyses the reaction a 1,2-diacyl-sn-glycero-3-phosphoethanolamine + L-serine = a 1,2-diacyl-sn-glycero-3-phospho-L-serine + ethanolamine. It functions in the pathway phospholipid metabolism; phosphatidylserine biosynthesis. In terms of biological role, catalyzes a base-exchange reaction in which the polar head group of phosphatidylethanolamine (PE) is replaced by L-serine. The sequence is that of Phosphatidylserine synthase from Drosophila melanogaster (Fruit fly).